The following is a 260-amino-acid chain: Cell division protein FtsQ (260 aa).

Residues 1–26 (MINKVLLEGQRITRSPQVKQHACGAS) are Cytoplasmic-facing. A helical membrane pass occupies residues 27 to 47 (FFLVVLLLIGGLLYSTISWMW). Topologically, residues 48–260 (DEQRLPLSKL…QELTQEKNDD (213 aa)) are periplasmic. The region spanning 52–122 (LPLSKLVLQG…DTIKVYLTEY (71 aa)) is the POTRA domain.

It belongs to the FtsQ/DivIB family. FtsQ subfamily. In terms of assembly, part of a complex composed of FtsB, FtsL and FtsQ.

The protein localises to the cell inner membrane. Functionally, essential cell division protein. May link together the upstream cell division proteins, which are predominantly cytoplasmic, with the downstream cell division proteins, which are predominantly periplasmic. May control correct divisome assembly. In Vibrio cholerae serotype O1 (strain ATCC 39315 / El Tor Inaba N16961), this protein is Cell division protein FtsQ.